Here is a 484-residue protein sequence, read N- to C-terminus: MALFEIIISLFVVYIIHNAISKYKKIHVNELCGPTPIPILGNLHQFGELPHRVLTKMTKKYGHILRVYMADMYTVVVSDPLLIREMYVDNSDIFTDRVKKPSVEHGTFYHGTVTSYGEHWKNNREIVGKAMRKTNLKHIYELLDKQVDVLIRSMKSIETSGKTFDTRYYITKFTMSAMFKFLFNHDIPEDEDINKGDTQKLMGPMSEVFQNAGRGSLFDVINITQPLYLLYLEMFDQSFKDIMKYHREKYNEHLKTFDPDVERDLLDILIKEYGTDNDDKILSILATINDFFLAGVDTSSTALESMVLMLTNYPEIQEKAFDEIKTVVNGRSKVNLSDRQSTPYLVAVIKETLRYKPMSPFGLPRSSSKDCMIGGHFIPKNAQILINYQALGMNEEYYENPEQFDPSRFLKVESNVAFLPFSIGIRSCVGQSFAQDELYICISNILLNFKLKSIDGKKIDETEEYGLTLKTKNRFNVTLEKRII.

A helical membrane pass occupies residues 1-21 (MALFEIIISLFVVYIIHNAIS). Residue Cys-428 participates in heme binding.

The protein belongs to the cytochrome P450 family. The cofactor is heme.

It localises to the membrane. The protein is Probable cytochrome P450 508A1 (cyp508A1-1) of Dictyostelium discoideum (Social amoeba).